Here is a 231-residue protein sequence, read N- to C-terminus: Endonuclease NucS (231 aa).

Belongs to the NucS endonuclease family.

The protein resides in the cytoplasm. Cleaves both 3' and 5' ssDNA extremities of branched DNA structures. The polypeptide is Endonuclease NucS (Arthrobacter sp. (strain FB24)).